A 215-amino-acid chain; its full sequence is Eukaryotic translation initiation factor 4E (215 aa).

Positions 1–27 are disordered; the sequence is MAERDSEPRVNIIRPDDEPEVEEERVP. Position 207 is a phosphoserine; by PKC (serine 207).

The protein belongs to the eukaryotic initiation factor 4E family. In terms of assembly, eIF4F is a multi-subunit complex, the composition of which varies with external and internal environmental conditions. It is composed of at least eIF4A, eIF4E and eIF4G. eIF4E is also known to interact with other partners. In terms of processing, phosphorylation increases the ability of the protein to bind to mRNA caps and to form the eIF4F complex.

In terms of biological role, recognizes and binds the 7-methylguanosine-containing mRNA cap during an early step in the initiation of protein synthesis and facilitates ribosome binding by inducing the unwinding of the mRNAs secondary structures. The polypeptide is Eukaryotic translation initiation factor 4E (Aplysia californica (California sea hare)).